Here is a 228-residue protein sequence, read N- to C-terminus: FPLLMQAWKLGPALACGNTVVMKTAEQTPLTALYVAALAKEAGFPPGVINIISGYGPTAGAAISEHMDVDKVAFTGSTETAHIVMEAAAKSNLKRVSLELGGKSPMIVLADSDLDFAVDTCHHGLFFNMGQCCCAGSRIYVQEGVYDEFVKKSVERAKKRTVGDPFTEGIEQGPQIDTEQFNKINRMIEEGKQSGAKLLCGGKRWGDKGYYIEPTVFSDVPDDSTIGS.

76-81 (GSTETA) contributes to the NAD(+) binding site. Active-site residues include Glu-99 and Cys-132.

It belongs to the aldehyde dehydrogenase family.

The catalysed reaction is an aldehyde + NAD(+) + H2O = a carboxylate + NADH + 2 H(+). It functions in the pathway alcohol metabolism; ethanol degradation; acetate from ethanol: step 2/2. The polypeptide is Aldehyde dehydrogenase 9 (ALDH9) (Polyandrocarpa misakiensis (Tunicate)).